Here is a 329-residue protein sequence, read N- to C-terminus: Ketol-acid reductoisomerase (NADP(+)) (329 aa).

The 181-residue stretch at 1 to 181 (MKIYYDQDAD…GGTRGGVLTT (181 aa)) folds into the KARI N-terminal Rossmann domain. Residues 24-27 (YGSQ), R47, and 82-85 (DQHQ) contribute to the NADP(+) site. H107 is a catalytic residue. Position 133 (G133) interacts with NADP(+). The region spanning 182 to 327 (TFKEETETDL…AKLRGMMSWL (146 aa)) is the KARI C-terminal knotted domain. Mg(2+) contacts are provided by D190, E194, E226, and E230. S251 provides a ligand contact to substrate.

The protein belongs to the ketol-acid reductoisomerase family. It depends on Mg(2+) as a cofactor.

The enzyme catalyses (2R)-2,3-dihydroxy-3-methylbutanoate + NADP(+) = (2S)-2-acetolactate + NADPH + H(+). It carries out the reaction (2R,3R)-2,3-dihydroxy-3-methylpentanoate + NADP(+) = (S)-2-ethyl-2-hydroxy-3-oxobutanoate + NADPH + H(+). It participates in amino-acid biosynthesis; L-isoleucine biosynthesis; L-isoleucine from 2-oxobutanoate: step 2/4. Its pathway is amino-acid biosynthesis; L-valine biosynthesis; L-valine from pyruvate: step 2/4. In terms of biological role, involved in the biosynthesis of branched-chain amino acids (BCAA). Catalyzes an alkyl-migration followed by a ketol-acid reduction of (S)-2-acetolactate (S2AL) to yield (R)-2,3-dihydroxy-isovalerate. In the isomerase reaction, S2AL is rearranged via a Mg-dependent methyl migration to produce 3-hydroxy-3-methyl-2-ketobutyrate (HMKB). In the reductase reaction, this 2-ketoacid undergoes a metal-dependent reduction by NADPH to yield (R)-2,3-dihydroxy-isovalerate. The sequence is that of Ketol-acid reductoisomerase (NADP(+)) from Solidesulfovibrio magneticus (strain ATCC 700980 / DSM 13731 / RS-1) (Desulfovibrio magneticus).